Reading from the N-terminus, the 536-residue chain is Anthranilate synthase component 1 2 (536 aa).

L-tryptophan contacts are provided by residues S59 and 299–301; that span reads PYM. 334 to 335 contributes to the chorismate binding site; sequence GT. E361 contributes to the Mg(2+) binding site. Residues Y449, R469, 487 to 489, and G489 each bind chorismate; that span reads GAG. Residue E502 coordinates Mg(2+).

This sequence belongs to the anthranilate synthase component I family. Tetramer of two components I and two components II. Mg(2+) serves as cofactor.

It carries out the reaction chorismate + L-glutamine = anthranilate + pyruvate + L-glutamate + H(+). It functions in the pathway amino-acid biosynthesis; L-tryptophan biosynthesis; L-tryptophan from chorismate: step 1/5. In Haloarcula marismortui (strain ATCC 43049 / DSM 3752 / JCM 8966 / VKM B-1809) (Halobacterium marismortui), this protein is Anthranilate synthase component 1 2 (trpE2).